Reading from the N-terminus, the 349-residue chain is UDP-3-O-acylglucosamine N-acyltransferase (349 aa).

Catalysis depends on His-240, which acts as the Proton acceptor.

This sequence belongs to the transferase hexapeptide repeat family. LpxD subfamily. Homotrimer.

It catalyses the reaction a UDP-3-O-[(3R)-3-hydroxyacyl]-alpha-D-glucosamine + a (3R)-hydroxyacyl-[ACP] = a UDP-2-N,3-O-bis[(3R)-3-hydroxyacyl]-alpha-D-glucosamine + holo-[ACP] + H(+). It participates in bacterial outer membrane biogenesis; LPS lipid A biosynthesis. In terms of biological role, catalyzes the N-acylation of UDP-3-O-acylglucosamine using 3-hydroxyacyl-ACP as the acyl donor. Is involved in the biosynthesis of lipid A, a phosphorylated glycolipid that anchors the lipopolysaccharide to the outer membrane of the cell. The chain is UDP-3-O-acylglucosamine N-acyltransferase from Porphyromonas gingivalis (strain ATCC 33277 / DSM 20709 / CIP 103683 / JCM 12257 / NCTC 11834 / 2561).